Reading from the N-terminus, the 198-residue chain is MKQFIDFIPLLLFFIVYKTEPRAVDILGNSYTFGGIFSATAMLIISSVVVYGILYIKQRKLEKSQWLTLVACLVFGSLTLAFHSETFLKWKAPVVNWLFAVAFAGSHFIGDRPLIQRIMGHALTLPAAIWTRLNIAWIIFFLFCGAANLYVAFTYQEFWVDFKVFGSLGMTLIFLVGQGIYLSRHLHDTTPNTPKSED.

5 consecutive transmembrane segments (helical) span residues 36–56 (IFSA…ILYI), 67–87 (LTLV…SETF), 90–110 (WKAP…HFIG), 133–153 (LNIA…YVAF), and 162–182 (FKVF…GIYL).

This sequence belongs to the YciB family.

It is found in the cell inner membrane. In terms of biological role, plays a role in cell envelope biogenesis, maintenance of cell envelope integrity and membrane homeostasis. The sequence is that of Inner membrane-spanning protein YciB from Pseudomonas syringae pv. tomato (strain ATCC BAA-871 / DC3000).